We begin with the raw amino-acid sequence, 430 residues long: Adenylosuccinate synthetase (430 aa).

GTP is bound by residues 12-18 (GDEGKGK) and 40-42 (GHT). The active-site Proton acceptor is the D13. Positions 13 and 40 each coordinate Mg(2+). IMP contacts are provided by residues 13 to 16 (DEGK), 38 to 41 (NAGH), T128, R142, Q223, T238, and R302. The Proton donor role is filled by H41. Position 298 to 304 (298 to 304 (TTTGRPR)) interacts with substrate. Residues R304, 330 to 332 (SID), and 412 to 414 (SVG) contribute to the GTP site.

This sequence belongs to the adenylosuccinate synthetase family. As to quaternary structure, homodimer. It depends on Mg(2+) as a cofactor.

Its subcellular location is the cytoplasm. It catalyses the reaction IMP + L-aspartate + GTP = N(6)-(1,2-dicarboxyethyl)-AMP + GDP + phosphate + 2 H(+). Its pathway is purine metabolism; AMP biosynthesis via de novo pathway; AMP from IMP: step 1/2. Functionally, plays an important role in the de novo pathway of purine nucleotide biosynthesis. Catalyzes the first committed step in the biosynthesis of AMP from IMP. The polypeptide is Adenylosuccinate synthetase (Streptococcus pyogenes serotype M6 (strain ATCC BAA-946 / MGAS10394)).